Consider the following 77-residue polypeptide: Conotoxin Vc6b (77 aa).

Residues 1-22 form the signal peptide; the sequence is MKLTCMMIVAVLFLTANTFVTA. Residues 23–47 constitute a propeptide that is removed on maturation; the sequence is DDSGNGMENLFPKAGHEMENLEASN. 3 disulfide bridges follow: cysteine 52/cysteine 66, cysteine 59/cysteine 72, and cysteine 67/cysteine 76.

In terms of tissue distribution, expressed by the venom duct.

The protein localises to the secreted. The polypeptide is Conotoxin Vc6b (Conus victoriae (Queen Victoria cone)).